A 224-amino-acid chain; its full sequence is Propanediol dehydratase medium subunit (224 aa).

The segment at 1 to 18 (MEINEKLLRQIIEDVLSE) is targets protein to the BMC.

This sequence belongs to the diol/glycerol dehydratase medium subunit family. The propanediol dehydratase enzyme is a heterotrimeric complex composed of a large (PduC), a medium (PduD) and a small (PduE) subunit. It depends on adenosylcob(III)alamin as a cofactor.

It is found in the bacterial microcompartment. It catalyses the reaction propane-1,2-diol = propanal + H2O. The protein operates within polyol metabolism; 1,2-propanediol degradation. Its function is as follows. Part of the PduCDE complex that catalyzes the dehydration of 1,2-propanediol (1,2-PD) to propionaldehyde. This subunit is directly targeted to the bacterial microcompartment (BMC). In terms of biological role, expression of a cosmid containing the full 21-gene pdu operon in E.coli allows E.coli to grow on 1,2-propanediol (1,2-PD) with the appearance of BMCs in its cytoplasm. Functionally, the 1,2-PD-specific bacterial microcompartment (BMC) concentrates low levels of 1,2-PD catabolic enzymes, concentrates volatile reaction intermediates thus enhancing pathway flux and keeps the level of toxic, mutagenic propionaldehyde low. The polypeptide is Propanediol dehydratase medium subunit (Citrobacter freundii).